A 768-amino-acid polypeptide reads, in one-letter code: Mitochondrial 15S rRNA processing factor CCM1 (768 aa).

The N-terminal 90 residues, 1–90 (MIRLIRWNNV…RSFTKVIAQH (90 aa)), are a transit peptide targeting the mitochondrion. 2 disordered regions span residues 28 to 65 (NKRK…NTGS) and 90 to 114 (HLKP…LPPI). Residues 43–53 (NRKDGDIEPYR) show a composition bias toward basic and acidic residues. Positions 55–65 (TDQNQTPNTGS) are enriched in polar residues. 5 PPR repeats span residues 274-308 (KIDH…NIEI), 309-344 (SKMI…SQKT), 347-381 (DEKV…GMNV), 382-417 (NQNL…GWVP), and 418-452 (NLQT…NSVT). The span at 583 to 596 (IEPRQDEPTEKATT) shows a compositional bias: basic and acidic residues. Residues 583-609 (IEPRQDEPTEKATTTEEQNASSETDNN) are disordered. The segment covering 597 to 609 (TEEQNASSETDNN) has biased composition (polar residues). Residues 634-664 (DSYLYNLAIKAAGKFKNYGFAQEILHERGQF) form a PPR 6 repeat.

This sequence belongs to the CCM1 family. In terms of assembly, binds to mitochondrial small subunit 15S rRNA.

Its subcellular location is the mitochondrion. Regulates mitochondrial small subunit maturation by controlling 15S rRNA 5'-end processing. Localizes to the 5' precursor of the 15S rRNA in a position that is subsequently occupied by mS47 in the mature yeast mtSSU. Uses structure and sequence-specific RNA recognition, binding to a single-stranded region of the precursor and specifically recognizing bases -6 to -1. The exchange of Ccm1 for mS47 is coupled to the irreversible removal of precursor rRNA that is accompanied by conformational changes of the mitoribosomal proteins uS5m and mS26. These conformational changes signal completion of 5'-end rRNA processing through protection of the mature 5'-end of the 15S rRNA and stabilization of mS47. The removal of the 5' precursor together with the dissociation of Ccm1 may be catalyzed by the 5'-3' exoribonuclease Pet127. Involved in the specific removal of group I introns in mitochondrial encoded transcripts. This Candida albicans (strain SC5314 / ATCC MYA-2876) (Yeast) protein is Mitochondrial 15S rRNA processing factor CCM1 (CCM1).